The chain runs to 378 residues: Putative F-box only protein 15 (378 aa).

The F-box domain maps to 5–52 (KRVYRSLPFELVEEILKKTPAESLNRFKSTCKQWYGIITSKRFMYNHL).

The protein is Putative F-box only protein 15 (FBX15) of Arabidopsis thaliana (Mouse-ear cress).